Reading from the N-terminus, the 196-residue chain is Na(+)-translocating ferredoxin:NAD(+) oxidoreductase complex subunit E (196 aa).

5 helical membrane passes run 38 to 58, 68 to 88, 92 to 112, 127 to 147, and 169 to 189; these read MGMG…ISAL, IPAF…LMKA, ALDA…IILA, FADA…LGSI, and VLLM…IGLI.

Belongs to the NqrDE/RnfAE family. In terms of assembly, the complex is composed of six subunits: RnfA, RnfB, RnfC, RnfD, RnfE and RnfG.

The protein resides in the cell membrane. It carries out the reaction 2 reduced [2Fe-2S]-[ferredoxin] + Na(+)(in) + NAD(+) + H(+) = 2 oxidized [2Fe-2S]-[ferredoxin] + Na(+)(out) + NADH. Functionally, part of a membrane-bound complex that couples electron transfer with translocation of ions across the membrane. Couples electron transfer from reduced ferredoxin to NAD(+) with electrogenic movement of Na(+) out of the cell. Involved in caffeate respiration. In Acetobacterium woodii (strain ATCC 29683 / DSM 1030 / JCM 2381 / KCTC 1655 / WB1), this protein is Na(+)-translocating ferredoxin:NAD(+) oxidoreductase complex subunit E.